We begin with the raw amino-acid sequence, 445 residues long: UDP-N-acetylmuramoylalanine--D-glutamate ligase (445 aa).

ATP is bound at residue 117-123 (GSNGKTT).

This sequence belongs to the MurCDEF family.

The protein localises to the cytoplasm. It carries out the reaction UDP-N-acetyl-alpha-D-muramoyl-L-alanine + D-glutamate + ATP = UDP-N-acetyl-alpha-D-muramoyl-L-alanyl-D-glutamate + ADP + phosphate + H(+). The protein operates within cell wall biogenesis; peptidoglycan biosynthesis. Functionally, cell wall formation. Catalyzes the addition of glutamate to the nucleotide precursor UDP-N-acetylmuramoyl-L-alanine (UMA). The polypeptide is UDP-N-acetylmuramoylalanine--D-glutamate ligase (Neisseria meningitidis serogroup C (strain 053442)).